A 321-amino-acid polypeptide reads, in one-letter code: Probable heme-iron transport system permease protein IsdF (321 aa).

9 consecutive transmembrane segments (helical) span residues 9–29 (LLFL…FVTG), 61–81 (ILIA…LQAA), 89–109 (ANII…MLFI), 114–134 (FYLP…IILL), 143–163 (VSMI…LEIL), 179–199 (IWSD…LTLL), 233–253 (VFLA…GIIV), 267–287 (LIPF…LLGR), and 294–314 (EIPA…YLIC).

This sequence belongs to the binding-protein-dependent transport system permease family. FecCD subfamily.

It is found in the cell membrane. In terms of biological role, part of the binding-protein-dependent transport system for heme-iron. Responsible for the translocation of the substrate across the membrane. The chain is Probable heme-iron transport system permease protein IsdF (isdF) from Staphylococcus aureus (strain NCTC 8325 / PS 47).